The following is an 87-amino-acid chain: Small ribosomal subunit protein bS20 (87 aa).

Basic residues predominate over residues 1-12 (MANHKSALKRNR). Residues 1-21 (MANHKSALKRNRQAAVRNARN) form a disordered region.

Belongs to the bacterial ribosomal protein bS20 family.

In terms of biological role, binds directly to 16S ribosomal RNA. The chain is Small ribosomal subunit protein bS20 from Syntrophotalea carbinolica (strain DSM 2380 / NBRC 103641 / GraBd1) (Pelobacter carbinolicus).